The chain runs to 443 residues: Transcriptional adapter 2-alpha (443 aa).

Ser-6 carries the phosphoserine modification. A ZZ-type zinc finger spans residues Ser-12–Pro-69. The Zn(2+) site is built by Cys-17, Cys-20, Cys-31, Cys-34, Cys-42, Cys-45, His-55, and His-59. The 53-residue stretch at Val-70 to Pro-122 folds into the SANT domain. Residues Lys-132 and Lys-138 each participate in a glycyl lysine isopeptide (Lys-Gly) (interchain with G-Cter in SUMO2) cross-link. The span at Leu-347–Arg-359 shows a compositional bias: polar residues. The disordered stretch occupies residues Leu-347–Gly-372. Residues Asn-356 to Ala-443 enclose the SWIRM domain. A DNA-binding region spans residues Lys-426 to Ile-435.

Interacts with GCN5 and NR3C1. Associated with the P/CAF protein in the PCAF complex. Component of the PCAF complex, at least composed of TADA2L/ADA2, TADA3L/ADA3, TAF5L/PAF65-beta, TAF6L/PAF65-alpha, TAF10/TAFII30, TAF12/TAFII20, TAF9/TAFII31 and TRRAP. Component of the ADA2A-containing complex (ATAC), composed of KAT14, KAT2A, TADA2L, TADA3L, ZZ3, MBIP, WDR5, YEATS2, CCDC101 and DR1. Interacts with CCDC134.

It localises to the nucleus. Its subcellular location is the chromosome. In terms of biological role, component of the ATAC complex, a complex with histone acetyltransferase activity on histones H3 and H4. Required for the function of some acidic activation domains, which activate transcription from a distant site. Binds double-stranded DNA. Binds dinucleosomes, probably at the linker region between neighboring nucleosomes. Plays a role in chromatin remodeling. May promote TP53/p53 'Lys-321' acetylation, leading to reduced TP53 stability and transcriptional activity. May also promote XRCC6 acetylation thus facilitating cell apoptosis in response to DNA damage. The sequence is that of Transcriptional adapter 2-alpha (TADA2A) from Bos taurus (Bovine).